We begin with the raw amino-acid sequence, 320 residues long: MSTPFKMERGVKYRDAAKTSIIPVKNIDPNQELLKKPEWMKIKLPASSAKIESIKNGMRRHGLHSVCEEASCPNLHECFNHGTATFMILGAICTRRCPFCDVAHGKPLPPDPEEPQKLAETIQDMKLKYVVITSVDRDDLPDRGAGHFSECVKAVRELNPNIKIEILVPDFRGRVTQALEKLKDNPPDVFNHNLENVPRLYKEIRPGADYEWSLKLLREFKEMFPNIPTKSGLMVGLGETNEEILQVMQDLRDNGVTMLTLGQYLQPSRHHLPVARYVPPTEFDIFRDKANEMGFEHAACGPFVRSSYHADLQASGGLVK.

Cys-67, Cys-72, Cys-78, Cys-93, Cys-97, Cys-100, and Ser-307 together coordinate [4Fe-4S] cluster. The region spanning 79 to 296 is the Radical SAM core domain; the sequence is FNHGTATFMI…RDKANEMGFE (218 aa).

Belongs to the radical SAM superfamily. Lipoyl synthase family. It depends on [4Fe-4S] cluster as a cofactor.

It is found in the cytoplasm. The catalysed reaction is [[Fe-S] cluster scaffold protein carrying a second [4Fe-4S](2+) cluster] + N(6)-octanoyl-L-lysyl-[protein] + 2 oxidized [2Fe-2S]-[ferredoxin] + 2 S-adenosyl-L-methionine + 4 H(+) = [[Fe-S] cluster scaffold protein] + N(6)-[(R)-dihydrolipoyl]-L-lysyl-[protein] + 4 Fe(3+) + 2 hydrogen sulfide + 2 5'-deoxyadenosine + 2 L-methionine + 2 reduced [2Fe-2S]-[ferredoxin]. It functions in the pathway protein modification; protein lipoylation via endogenous pathway; protein N(6)-(lipoyl)lysine from octanoyl-[acyl-carrier-protein]: step 2/2. In terms of biological role, catalyzes the radical-mediated insertion of two sulfur atoms into the C-6 and C-8 positions of the octanoyl moiety bound to the lipoyl domains of lipoate-dependent enzymes, thereby converting the octanoylated domains into lipoylated derivatives. The polypeptide is Lipoyl synthase (Haemophilus influenzae (strain PittGG)).